The chain runs to 1081 residues: Importin-4 (1081 aa).

Met-1 carries the N-acetylmethionine modification. The Importin N-terminal domain maps to 24 to 90 (ATEQLQIVLR…KSLILTALQR (67 aa)). HEAT repeat units lie at residues 348-385 (KLCP…GAGD), 390-427 (RLLP…NLQP), 431-471 (SYSR…NLGP), 475-513 (PYLP…AAQA), 895-932 (QFVS…HGGH), and 936-974 (EHFP…ASPT).

The protein belongs to the importin beta family. Found in a cytosolic complex with ASF1 (ASF1A or ASF1B) and histones H3 and H4.

The protein resides in the cytoplasm. It is found in the nucleus. Its function is as follows. Nuclear transport receptor that mediates nuclear import of proteins, such as histones, RPS3A, TNP2 and VDR. Serves as receptor for nuclear localization signals (NLS) in cargo substrates. Is thought to mediate docking of the importin/substrate complex to the nuclear pore complex (NPC) through binding to nucleoporin and the complex is subsequently translocated through the pore by an energy requiring, Ran-dependent mechanism. At the nucleoplasmic side of the NPC, Ran binds to the importin, the importin/substrate complex dissociates and importin is re-exported from the nucleus to the cytoplasm where GTP hydrolysis releases Ran. The directionality of nuclear import is thought to be conferred by an asymmetric distribution of the GTP- and GDP-bound forms of Ran between the cytoplasm and nucleus. Mediates the nuclear import of the histone H3-H4 dimer when in complex with ASF1 (ASF1A or ASF1B). Mediates the ligand-independent nuclear import of vitamin D receptor (VDR). In vitro, mediates the nuclear import of human cytomegalovirus UL84 by recognizing a non-classical NLS. This chain is Importin-4 (IPO4), found in Homo sapiens (Human).